A 614-amino-acid chain; its full sequence is Zinc metalloproteinase-disintegrin-like VLAIP-B (614 aa).

An N-terminal signal peptide occupies residues 1 to 20 (MMQVLLVTICLAVFPYQGSS). Residues 21–193 (IILESGNVND…KASQLNLTPE (173 aa)) constitute a propeptide that is removed on maturation. Gln-194 is modified (pyrrolidone carboxylic acid). One can recognise a Peptidase M12B domain in the interval 202 to 398 (KYVELVIVAD…KMPQCILNKP (197 aa)). Ca(2+) is bound at residue Glu-205. Asn-262 is a glycosylation site (N-linked (GlcNAc...) asparagine). Asp-289 serves as a coordination point for Ca(2+). Disulfide bonds link Cys-313–Cys-393, Cys-353–Cys-377, and Cys-355–Cys-360. His-338 contributes to the Zn(2+) binding site. Glu-339 is an active-site residue. Residues His-342 and His-348 each contribute to the Zn(2+) site. The Ca(2+) site is built by Cys-393, Asn-396, Val-408, Asn-411, Phe-413, Glu-415, Glu-418, and Asp-421. Residues 406–492 (PAVCGNYFVE…ECPTDQFQRN (87 aa)) enclose the Disintegrin domain. 14 disulfides stabilise this stretch: Cys-409/Cys-438, Cys-420/Cys-433, Cys-422/Cys-428, Cys-432/Cys-455, Cys-446/Cys-452, Cys-451/Cys-477, Cys-464/Cys-484, Cys-471/Cys-503, Cys-496/Cys-508, Cys-515/Cys-565, Cys-530/Cys-576, Cys-543/Cys-553, Cys-560/Cys-602, and Cys-596/Cys-607. Positions 470–472 (ECD) match the D/ECD-tripeptide motif. Residues Asn-505, Asn-547, and Asn-568 are each glycosylated (N-linked (GlcNAc...) asparagine).

Belongs to the venom metalloproteinase (M12B) family. P-III subfamily. P-IIIc sub-subfamily. Heterodimer; disulfide-linked. Requires Zn(2+) as cofactor. Post-translationally, the N-terminus is blocked. As to expression, expressed by the venom gland.

The protein localises to the secreted. Its activity is regulated as follows. Inhibited by EDTA or 1,10-phenanthroline. Not inhibited by PMSF. This metalloproteinase hydrolyzes azocasein, and insulin B-chain (at the '38-Ala-|-Leu-39' bond). Also hydrolyzes the Aalpha-chain (FGA) and more slowly the Bbeta-chain of fibrinogen (FGB), without affecting the gamma-chain. Cleaves alpha-chain of fibrinogen at '432-Lys-|-Leu-433' and '535-Pro-|-Met-536' bonds. Does not cleave fibrin. Inhibits endothelial cell adhesion to extracellular matrix proteins such as fibrinogen, fibronectin, vitronectin, collagen I, and collagen IV. Induces apoptosis in vascular endothelial cells. The polypeptide is Zinc metalloproteinase-disintegrin-like VLAIP-B (Macrovipera lebetinus (Levantine viper)).